A 153-amino-acid polypeptide reads, in one-letter code: Regulator of ribonuclease activity B (153 aa).

Residues 114–153 (DPNADDDEYGDDGEFLDDEDEYGDDGEFFDDEDEEEPRVH) are disordered. Positions 115 to 153 (PNADDDEYGDDGEFLDDEDEYGDDGEFFDDEDEEEPRVH) are enriched in acidic residues.

This sequence belongs to the RraB family. Interacts with the C-terminal region of Rne.

The protein resides in the cytoplasm. Its function is as follows. Globally modulates RNA abundance by binding to RNase E (Rne) and regulating its endonucleolytic activity. Can modulate Rne action in a substrate-dependent manner by altering the composition of the degradosome. This is Regulator of ribonuclease activity B from Haemophilus influenzae (strain ATCC 51907 / DSM 11121 / KW20 / Rd).